Reading from the N-terminus, the 353-residue chain is RNA 3'-terminal phosphate cyclase (353 aa).

ATP contacts are provided by residues Q100 and 289-292; that span reads HMSD. The Tele-AMP-histidine intermediate role is filled by H315.

The protein belongs to the RNA 3'-terminal cyclase family. Type 1 subfamily.

It localises to the cytoplasm. The catalysed reaction is a 3'-end 3'-phospho-ribonucleotide-RNA + ATP = a 3'-end 2',3'-cyclophospho-ribonucleotide-RNA + AMP + diphosphate. Its function is as follows. Catalyzes the conversion of 3'-phosphate to a 2',3'-cyclic phosphodiester at the end of RNA. The mechanism of action of the enzyme occurs in 3 steps: (A) adenylation of the enzyme by ATP; (B) transfer of adenylate to an RNA-N3'P to produce RNA-N3'PP5'A; (C) and attack of the adjacent 2'-hydroxyl on the 3'-phosphorus in the diester linkage to produce the cyclic end product. The biological role of this enzyme is unknown but it is likely to function in some aspects of cellular RNA processing. This Ignicoccus hospitalis (strain KIN4/I / DSM 18386 / JCM 14125) protein is RNA 3'-terminal phosphate cyclase.